Reading from the N-terminus, the 135-residue chain is uncharacterized protein (135 aa).

3 consecutive transmembrane segments (helical) span residues 12-32, 68-88, and 98-118; these read IPIL…YNGI, SMIG…AKFC, and GILY…FYLF.

Its subcellular location is the cell membrane. This is an uncharacterized protein from Methanocaldococcus jannaschii (strain ATCC 43067 / DSM 2661 / JAL-1 / JCM 10045 / NBRC 100440) (Methanococcus jannaschii).